Reading from the N-terminus, the 460-residue chain is Equilibrative nucleoside transporter 1 (460 aa).

Residues 1 to 12 (MTTSHQPQDRYK) are Cytoplasmic-facing. A helical membrane pass occupies residues 13-29 (AVWLIFFVLGLGTLLPW). Over 30 to 82 (NFFMTATKYFTNRLDVSQNVSSDTDQSCESTKALADPTVALPARSSLSAIFNN) the chain is Extracellular. The N-linked (GlcNAc...) asparagine glycan is linked to N48. A helical membrane pass occupies residues 83–107 (VMTLCAMLPLLVFTCLNSFLHQRIS). Over 108 to 111 (QSVR) the chain is Cytoplasmic. Residues 112 to 130 (ILGSLLAILLVFLVTAALV) traverse the membrane as a helical segment. Residues 131 to 138 (KVEMDALI) are Extracellular-facing. A helical membrane pass occupies residues 139-157 (FFVITMIKIVLINSFGAIL). Topologically, residues 158–174 (QASLFGLAGVLPANYTA) are cytoplasmic. A helical transmembrane segment spans residues 175–199 (PIMSGQGLAGFFTSVAMICAIASGS). Over 200 to 206 (ELSESAF) the chain is Extracellular. The chain crosses the membrane as a helical span at residues 207–227 (GYFITACAVVILAILCYLALP). The Cytoplasmic portion of the chain corresponds to 228-291 (RTEFYRHYLQ…IKAILKSICV (64 aa)). Residue S254 is modified to Phosphoserine. Residues 255-266 (KGEEPKGRREES) are compositionally biased toward basic and acidic residues. Residues 255–277 (KGEEPKGRREESGVPGPNSPPTN) are disordered. Phosphoserine is present on S273. Residues 292–311 (PALSVCFIFTVTIGLFPAVT) traverse the membrane as a helical segment. The Extracellular portion of the chain corresponds to 312–323 (AEVESSIAGTSP). Residues 324–342 (WKSYFIPVACFLNFNVFDW) form a helical membrane-spanning segment. At 343 to 359 (LGRSLTAVCMWPGQDSR) the chain is on the cytoplasmic side. The chain crosses the membrane as a helical span at residues 360–378 (WLPVLVASRIVFIPLLMLC). The Extracellular portion of the chain corresponds to 379-397 (NVKARHCGAQRHHFVFKHD). Residues 398–417 (AWFIAFMAAFAFSNGYLASL) form a helical membrane-spanning segment. The Cytoplasmic portion of the chain corresponds to 418–435 (CMCFGPKKVKPAEAETAG). The helical transmembrane segment at 436–456 (NIMSFFLCLGLALGAVLSFLL) threads the bilayer. Residues 457–460 (RALV) lie on the Extracellular side of the membrane.

The protein belongs to the SLC29A/ENT transporter (TC 2.A.57) family. In terms of assembly, identified in a complex with STOM. Glycosylated. As to expression, highly expressed in heart, spleen, lung, liver and testis. Lower level of expression in brain and kidney. Expressed in adipose tissues, brown adipocytes expressing significantly higher amounts than white adipocytes. Expressed in seminiferous tubules.

It localises to the basolateral cell membrane. It is found in the apical cell membrane. Its subcellular location is the cell membrane. The enzyme catalyses adenosine(in) = adenosine(out). The catalysed reaction is guanosine(in) = guanosine(out). It carries out the reaction inosine(in) = inosine(out). It catalyses the reaction uridine(out) = uridine(in). The enzyme catalyses thymidine(in) = thymidine(out). The catalysed reaction is cytidine(in) = cytidine(out). It carries out the reaction adenine(out) = adenine(in). It catalyses the reaction guanine(out) = guanine(in). The enzyme catalyses thymine(out) = thymine(in). The catalysed reaction is uracil(in) = uracil(out). It carries out the reaction hypoxanthine(out) = hypoxanthine(in). Transporter activity is sensitive to low concentrations of the inhibitor nitrobenzylmercaptopurine riboside (NBMPR). In terms of biological role, uniporter involved in the facilitative transport of nucleosides and nucleobases, and contributes to maintaining their cellular homeostasis. Functions as a Na(+)-independent transporter. Involved in the transport of nucleosides such as adenosine, guanosine, inosine, uridine, thymidine and cytidine. Also transports purine (hypoxanthine, adenine, guanine) and pyrimidine nucleobases (thymine, uracil). Mediates basolateral nucleoside uptake into Sertoli cells, thereby regulating the transport of nucleosides in testis across the blood-testis-barrier. Regulates inosine levels in brown adipocytes tissues (BAT) and extracellular inosine levels, which controls BAT-dependent energy expenditure. The chain is Equilibrative nucleoside transporter 1 from Mus musculus (Mouse).